A 92-amino-acid chain; its full sequence is Small ribosomal subunit protein uS19 (92 aa).

This sequence belongs to the universal ribosomal protein uS19 family.

In terms of biological role, protein S19 forms a complex with S13 that binds strongly to the 16S ribosomal RNA. The protein is Small ribosomal subunit protein uS19 of Vibrio parahaemolyticus serotype O3:K6 (strain RIMD 2210633).